The chain runs to 226 residues: Uracil-DNA glycosylase (226 aa).

The active-site Proton acceptor is Asp64.

This sequence belongs to the uracil-DNA glycosylase (UDG) superfamily. UNG family.

The protein localises to the cytoplasm. It carries out the reaction Hydrolyzes single-stranded DNA or mismatched double-stranded DNA and polynucleotides, releasing free uracil.. Excises uracil residues from the DNA which can arise as a result of misincorporation of dUMP residues by DNA polymerase or due to deamination of cytosine. In Proteus mirabilis (strain HI4320), this protein is Uracil-DNA glycosylase.